The primary structure comprises 344 residues: Selenide, water dikinase (344 aa).

The active site involves cysteine 16. ATP is bound by residues lysine 19 and 47 to 49; that span reads SRD. Aspartate 50 contacts Mg(2+). ATP contacts are provided by residues aspartate 67, aspartate 90, and 138 to 140; that span reads GHS. Residue aspartate 90 coordinates Mg(2+). Aspartate 226 is a Mg(2+) binding site.

Belongs to the selenophosphate synthase 1 family. Class I subfamily. Homodimer. The cofactor is Mg(2+).

The enzyme catalyses hydrogenselenide + ATP + H2O = selenophosphate + AMP + phosphate + 2 H(+). Its function is as follows. Synthesizes selenophosphate from selenide and ATP. The protein is Selenide, water dikinase of Bordetella bronchiseptica (strain ATCC BAA-588 / NCTC 13252 / RB50) (Alcaligenes bronchisepticus).